A 358-amino-acid chain; its full sequence is DNA ligase C (358 aa).

Catalysis depends on Lys-29, which acts as the N6-AMP-lysine intermediate.

The protein belongs to the ATP-dependent DNA ligase family. A divalent metal cation serves as cofactor.

The enzyme catalyses ATP + (deoxyribonucleotide)n-3'-hydroxyl + 5'-phospho-(deoxyribonucleotide)m = (deoxyribonucleotide)n+m + AMP + diphosphate.. In terms of biological role, DNA ligase that seals nicks in double-stranded DNA during DNA replication, DNA recombination and DNA repair. In Mycobacterium tuberculosis (strain ATCC 25618 / H37Rv), this protein is DNA ligase C (ligC).